The following is a 308-amino-acid chain: Putative mitochondrial transporter UCP3 (308 aa).

The Mitochondrial intermembrane portion of the chain corresponds to 1 to 10 (MVGLQPSEVP). Residues 11 to 32 (PTTVVKFLGAGTAACFADLLTF) form a helical membrane-spanning segment. Solcar repeat units follow at residues 11–102 (PTTV…VKQF), 111–202 (SSVA…IKEK), and 211–296 (DNFP…LKRA). Topologically, residues 33 to 73 (PLDTAKVRLQIQGENPGAQSVQYRGVLGTILTMVRTEGPRS) are mitochondrial matrix. Residues 74 to 96 (PYSGLVAGLHRQMSFASIRIGLY) traverse the membrane as a helical segment. The Mitochondrial intermembrane portion of the chain corresponds to 97–116 (DSVKQFYTPKGADHSSVAIR). A helical transmembrane segment spans residues 117-133 (ILAGCTTGAMAVTCAQP). The Mitochondrial matrix portion of the chain corresponds to 134–179 (TDVVKVRFQAMIRLGTGGERKYRGTMDAYRTIAREEGVRGLWKGTW). Residues 180–196 (PNITRNAIVNCAEMVTY) form a helical membrane-spanning segment. The Mitochondrial intermembrane segment spans residues 197–213 (DIIKEKLLESHLFTDNF). Residues 214–233 (PCHFVSAFGAGFCATVVASP) traverse the membrane as a helical segment. Over 234-267 (VDVVKTRYMNAPLGRYRSPLHCMLKMVAQEGPTA) the chain is Mitochondrial matrix. The chain crosses the membrane as a helical span at residues 268 to 290 (FYKGFVPSFLRLGAWNVMMFVTY). The tract at residues 275–297 (SFLRLGAWNVMMFVTYEQLKRAL) is purine nucleotide binding. Residues 291–308 (EQLKRALMKVQVLRESPF) lie on the Mitochondrial intermembrane side of the membrane.

It belongs to the mitochondrial carrier (TC 2.A.29) family. As to quaternary structure, interacts with HAX1; the interaction is direct and calcium-dependent.

It is found in the mitochondrion inner membrane. Its activity is regulated as follows. Inhibited by purine nucleotides and inorganic phosphate (in vitro). Functionally, putative transmembrane transporter that plays a role in mitochondrial metabolism via an as yet unclear mechanism. Originally, this mitochondrial protein was thought to act as a proton transmembrane transporter from the mitochondrial intermembrane space into the matrix, causing proton leaks through the inner mitochondrial membrane, thereby uncoupling mitochondrial membrane potential generation from ATP synthesis. However, this function is controversial and uncoupling may not be the function, or at least not the main function, but rather a consequence of more conventional metabolite transporter activity. The chain is Putative mitochondrial transporter UCP3 from Mus musculus (Mouse).